The following is a 384-amino-acid chain: Surfeit locus protein 1-like (384 aa).

3 consecutive transmembrane segments (helical) span residues 55-75, 302-322, and 338-358; these read ALLW…YKFL, IPLD…TCFI, and IGVE…TKIY.

The protein belongs to the SURF1 (TC 3.D.4.8) family.

The protein localises to the mitochondrion inner membrane. Its function is as follows. May be involved in the biogenesis of the COX complex. This Arabidopsis thaliana (Mouse-ear cress) protein is Surfeit locus protein 1-like.